Reading from the N-terminus, the 154-residue chain is Endoribonuclease YbeY (154 aa).

Positions 117, 121, and 127 each coordinate Zn(2+).

Belongs to the endoribonuclease YbeY family. Zn(2+) is required as a cofactor.

It is found in the cytoplasm. Its function is as follows. Single strand-specific metallo-endoribonuclease involved in late-stage 70S ribosome quality control and in maturation of the 3' terminus of the 16S rRNA. The chain is Endoribonuclease YbeY from Mycoplasma pneumoniae (strain ATCC 29342 / M129 / Subtype 1) (Mycoplasmoides pneumoniae).